Here is a 556-residue protein sequence, read N- to C-terminus: Vetispiradiene synthase 1 (556 aa).

Mg(2+)-binding residues include aspartate 309, aspartate 313, aspartate 452, threonine 456, and glutamate 460. The short motif at 309 to 313 (DDTFD) is the DDXXD motif element.

It belongs to the terpene synthase family. Tpsa subfamily. It depends on Mg(2+) as a cofactor.

It is found in the cytoplasm. The catalysed reaction is (2E,6E)-farnesyl diphosphate = (-)-vetispiradiene + diphosphate. The protein operates within secondary metabolite biosynthesis; terpenoid biosynthesis. Functionally, sesquiterpene synthase that catalyzes the formation of vetispiradiene from trans,trans-farnesyl diphosphate. The initial internal cyclization produces the monocyclic intermediate germacrene A. In Solanum tuberosum (Potato), this protein is Vetispiradiene synthase 1 (PVS1).